The sequence spans 1383 residues: PAS domain-containing serine/threonine-protein kinase (1383 aa).

An N-acetylmethionine modification is found at Met1. At Ser19 the chain carries Phosphoserine. At Thr31 the chain carries Phosphothreonine. 2 PAS domains span residues 117 to 188 (SGSL…VEAD) and 333 to 400 (YQAS…SVQL). A Phosphoserine modification is found at Ser1000. Positions 1059–1311 (YNTISPLGSG…LEKLIRDPWV (253 aa)) constitute a Protein kinase domain. Residues 1065 to 1073 (LGSGAFGFV), Lys1088, and 1142 to 1149 (EKHGSGMD) contribute to the ATP site. Catalysis depends on Asp1188, which acts as the Proton acceptor. Asp1206 serves as a coordination point for ATP. Phosphothreonine; by autocatalysis is present on residues Thr1221 and Thr1225. A disordered region spans residues 1344 to 1383 (GSRSPSEMAQREGLCGPPAPRETRGDQHCLHLKDPSLPVS). Residues 1364–1377 (RETRGDQHCLHLKD) show a composition bias toward basic and acidic residues.

Belongs to the protein kinase superfamily. CAMK Ser/Thr protein kinase family. Post-translationally, autophosphorylated on Thr-1221 and Thr-1225. Autophosphorylation is activated by phospholipids. Ubiquitously expressed. Strongly up-regulated in postmeiotic germ cells during spermatogenesis.

It localises to the cytoplasm. The protein localises to the nucleus. It carries out the reaction L-seryl-[protein] + ATP = O-phospho-L-seryl-[protein] + ADP + H(+). The enzyme catalyses L-threonyl-[protein] + ATP = O-phospho-L-threonyl-[protein] + ADP + H(+). With respect to regulation, protein kinase activity is inhibited by the first PAS domain: binding of an unidentified ligand desinhibits the protein kinase activity. May be activated by autophosphorylation on Thr-1221 and Thr-1225. Autophosphorylation is enhanced upon phosphatidylinositol monophosphate (phosphatidylinositol 4-phosphate) binding and inhibited upon phosphatidylinositol bi- and tri-phosphate binding. In contrast, phosphorylation of target proteins is inhibited upon all phosphatidylinositol-binding (phosphatidylinositol mono- bi- and tri-phosphate). Functionally, serine/threonine-protein kinase involved in energy homeostasis and protein translation. Phosphorylates EEF1A1, GYS1, PDX1 and RPS6. Probably plays a role under changing environmental conditions (oxygen, glucose, nutrition), rather than under standard conditions. Acts as a sensor involved in energy homeostasis: regulates glycogen synthase synthesis by mediating phosphorylation of GYS1, leading to GYS1 inactivation. May be involved in glucose-stimulated insulin production in pancreas and regulation of glucagon secretion by glucose in alpha cells; however such data require additional evidences. May play a role in regulation of protein translation by phosphorylating EEF1A1, leading to increase translation efficiency. May also participate in respiratory regulation. This Mus musculus (Mouse) protein is PAS domain-containing serine/threonine-protein kinase (Pask).